The following is a 1106-amino-acid chain: Voltage-dependent calcium channel subunit alpha-2/delta-1 (1106 aa).

An N-terminal signal peptide occupies residues methionine 1 to glutamate 26. The Extracellular segment spans residues glutamate 27 to glycine 1076. N-linked (GlcNAc...) asparagine glycosylation is present at asparagine 94. Residue serine 121 is modified to Phosphoserine. Asparagine 138 and asparagine 186 each carry an N-linked (GlcNAc...) asparagine glycan. Positions aspartate 255–leucine 432 constitute a VWFA domain. Residues aspartate 261, serine 263, and serine 265 each coordinate a divalent metal cation. An MIDAS-like motif motif is present at residues aspartate 261–serine 265. Residues asparagine 326 and asparagine 350 are each glycosylated (N-linked (GlcNAc...) asparagine). Cysteine 406 and cysteine 1062 are oxidised to a cystine. The 92-residue stretch at tryptophan 448 to proline 539 folds into the Cache domain. Residues asparagine 615, asparagine 784, and asparagine 891 are each glycosylated (N-linked (GlcNAc...) asparagine). Residues valine 1077 to leucine 1097 form a helical membrane-spanning segment. Residues valine 1098–leucine 1106 lie on the Cytoplasmic side of the membrane.

The protein belongs to the calcium channel subunit alpha-2/delta family. Dimer formed of alpha-2-1 and delta-1 chains; disulfide-linked. Voltage-dependent calcium channels are multisubunit complexes, consisting of alpha-1 (CACNA1), alpha-2 (CACNA2D), beta (CACNB) and delta (CACNA2D) subunits in a 1:1:1:1 ratio. In terms of processing, proteolytically processed into subunits alpha-2-1 and delta-1 that are disulfide-linked. Skeletal muscle.

The protein resides in the membrane. The protein localises to the cell membrane. The alpha-2/delta subunit of voltage-dependent calcium channels regulates calcium current density and activation/inactivation kinetics of the calcium channel. Plays an important role in excitation-contraction coupling. This chain is Voltage-dependent calcium channel subunit alpha-2/delta-1 (CACNA2D1), found in Oryctolagus cuniculus (Rabbit).